The following is a 226-amino-acid chain: 2,3-bisphosphoglycerate-dependent phosphoglycerate mutase (226 aa).

Residues 8-15 (RHGQSVWN), 21-22 (TG), Arg58, 109-112 (ERMY), Lys120, 136-137 (RR), and 180-181 (GN) each bind substrate. The Tele-phosphohistidine intermediate role is filled by His9. Residue Glu109 is the Proton donor/acceptor of the active site.

The protein belongs to the phosphoglycerate mutase family. BPG-dependent PGAM subfamily.

The enzyme catalyses (2R)-2-phosphoglycerate = (2R)-3-phosphoglycerate. It functions in the pathway carbohydrate degradation; glycolysis; pyruvate from D-glyceraldehyde 3-phosphate: step 3/5. Functionally, catalyzes the interconversion of 2-phosphoglycerate and 3-phosphoglycerate. The protein is 2,3-bisphosphoglycerate-dependent phosphoglycerate mutase of Chlamydia trachomatis serovar L2b (strain UCH-1/proctitis).